The chain runs to 318 residues: D-alanine--D-alanine ligase (318 aa).

Positions 116–311 (KQVWQSLGIP…FQQLVLAILA (196 aa)) constitute an ATP-grasp domain. 142-197 (STELGFPLIVKPAHEGSSIGMAKVNSAQELVAAWQDAAKYDSQVLVEQWIHGPEFT) contacts ATP. The Mg(2+) site is built by aspartate 265, glutamate 278, and asparagine 280.

This sequence belongs to the D-alanine--D-alanine ligase family. Requires Mg(2+) as cofactor. The cofactor is Mn(2+).

It localises to the cytoplasm. It carries out the reaction 2 D-alanine + ATP = D-alanyl-D-alanine + ADP + phosphate + H(+). Its pathway is cell wall biogenesis; peptidoglycan biosynthesis. Cell wall formation. The chain is D-alanine--D-alanine ligase from Pseudomonas putida (strain GB-1).